The chain runs to 356 residues: D-alanine--D-alanine ligase (356 aa).

The region spanning 134–339 is the ATP-grasp domain; that stretch reads KQLFEHRGLP…YPELITKLIE (206 aa). 167 to 222 is a binding site for ATP; sequence NDKLNYPVFVKPANLGSSIGISKCSNEVELKEGIKEAFQFDRKLVIEQGVNAREIE. The Mg(2+) site is built by D293, E306, and N308.

The protein belongs to the D-alanine--D-alanine ligase family. Requires Mg(2+) as cofactor. It depends on Mn(2+) as a cofactor.

The protein resides in the cytoplasm. The catalysed reaction is 2 D-alanine + ATP = D-alanyl-D-alanine + ADP + phosphate + H(+). It participates in cell wall biogenesis; peptidoglycan biosynthesis. Its function is as follows. Cell wall formation. In Staphylococcus aureus (strain MRSA252), this protein is D-alanine--D-alanine ligase.